The primary structure comprises 167 residues: Peptide deformylase (167 aa).

2 residues coordinate Fe cation: cysteine 90 and histidine 132. Residue glutamate 133 is part of the active site. Histidine 136 contributes to the Fe cation binding site.

The protein belongs to the polypeptide deformylase family. Requires Fe(2+) as cofactor.

It catalyses the reaction N-terminal N-formyl-L-methionyl-[peptide] + H2O = N-terminal L-methionyl-[peptide] + formate. Its function is as follows. Removes the formyl group from the N-terminal Met of newly synthesized proteins. Requires at least a dipeptide for an efficient rate of reaction. N-terminal L-methionine is a prerequisite for activity but the enzyme has broad specificity at other positions. The sequence is that of Peptide deformylase from Dehalococcoides mccartyi (strain CBDB1).